The chain runs to 153 residues: Lipoprotein signal peptidase (153 aa).

A run of 3 helical transmembrane segments spans residues 7–27 (LIIISIFLIDFFTKKWILNNY), 59–79 (NLIRILIIVISIFILLFIFYM), and 93–113 (SIIIGGSFGNIFDRIFYGSVI). Catalysis depends on residues Asp-114 and Asp-132. Residues 123–143 (WHFPVFNFADISIFIGFLILI) form a helical membrane-spanning segment.

The protein belongs to the peptidase A8 family.

The protein localises to the cell membrane. It carries out the reaction Release of signal peptides from bacterial membrane prolipoproteins. Hydrolyzes -Xaa-Yaa-Zaa-|-(S,diacylglyceryl)Cys-, in which Xaa is hydrophobic (preferably Leu), and Yaa (Ala or Ser) and Zaa (Gly or Ala) have small, neutral side chains.. It functions in the pathway protein modification; lipoprotein biosynthesis (signal peptide cleavage). Its function is as follows. This protein specifically catalyzes the removal of signal peptides from prolipoproteins. This Wigglesworthia glossinidia brevipalpis protein is Lipoprotein signal peptidase.